Reading from the N-terminus, the 708-residue chain is Polyribonucleotide nucleotidyltransferase (708 aa).

Positions 490 and 496 each coordinate Mg(2+). In terms of domain architecture, KH spans 557 to 619 (PRIETMTIPK…KSIDDAIRLI (63 aa)). In terms of domain architecture, S1 motif spans 629–699 (GEVYKGKVRS…KTGKFKLSRK (71 aa)).

The protein belongs to the polyribonucleotide nucleotidyltransferase family. Requires Mg(2+) as cofactor.

It is found in the cytoplasm. The catalysed reaction is RNA(n+1) + phosphate = RNA(n) + a ribonucleoside 5'-diphosphate. Functionally, involved in mRNA degradation. Catalyzes the phosphorolysis of single-stranded polyribonucleotides processively in the 3'- to 5'-direction. In Bacteroides fragilis (strain ATCC 25285 / DSM 2151 / CCUG 4856 / JCM 11019 / LMG 10263 / NCTC 9343 / Onslow / VPI 2553 / EN-2), this protein is Polyribonucleotide nucleotidyltransferase.